We begin with the raw amino-acid sequence, 126 residues long: Large ribosomal subunit protein bL19 (126 aa).

Belongs to the bacterial ribosomal protein bL19 family.

This protein is located at the 30S-50S ribosomal subunit interface and may play a role in the structure and function of the aminoacyl-tRNA binding site. This chain is Large ribosomal subunit protein bL19, found in Bordetella petrii (strain ATCC BAA-461 / DSM 12804 / CCUG 43448).